The primary structure comprises 652 residues: tRNA 5-methylaminomethyl-2-thiouridine biosynthesis bifunctional protein MnmC (652 aa).

A tRNA (mnm(5)s(2)U34)-methyltransferase region spans residues 1–235; sequence MPDRLVPATL…EPALRVGEYA (235 aa). An FAD-dependent cmnm(5)s(2)U34 oxidoreductase region spans residues 259–652; sequence IGAGLAGCAV…IRALRGRQIG (394 aa).

This sequence in the N-terminal section; belongs to the methyltransferase superfamily. tRNA (mnm(5)s(2)U34)-methyltransferase family. The protein in the C-terminal section; belongs to the DAO family. It depends on FAD as a cofactor.

The protein localises to the cytoplasm. It carries out the reaction 5-aminomethyl-2-thiouridine(34) in tRNA + S-adenosyl-L-methionine = 5-methylaminomethyl-2-thiouridine(34) in tRNA + S-adenosyl-L-homocysteine + H(+). Functionally, catalyzes the last two steps in the biosynthesis of 5-methylaminomethyl-2-thiouridine (mnm(5)s(2)U) at the wobble position (U34) in tRNA. Catalyzes the FAD-dependent demodification of cmnm(5)s(2)U34 to nm(5)s(2)U34, followed by the transfer of a methyl group from S-adenosyl-L-methionine to nm(5)s(2)U34, to form mnm(5)s(2)U34. This is tRNA 5-methylaminomethyl-2-thiouridine biosynthesis bifunctional protein MnmC from Burkholderia ambifaria (strain ATCC BAA-244 / DSM 16087 / CCUG 44356 / LMG 19182 / AMMD) (Burkholderia cepacia (strain AMMD)).